The chain runs to 97 residues: Co-chaperonin GroES (97 aa).

It belongs to the GroES chaperonin family. As to quaternary structure, heptamer of 7 subunits arranged in a ring. Interacts with the chaperonin GroEL.

Its subcellular location is the cytoplasm. Its function is as follows. Together with the chaperonin GroEL, plays an essential role in assisting protein folding. The GroEL-GroES system forms a nano-cage that allows encapsulation of the non-native substrate proteins and provides a physical environment optimized to promote and accelerate protein folding. GroES binds to the apical surface of the GroEL ring, thereby capping the opening of the GroEL channel. This is Co-chaperonin GroES from Pseudomonas fluorescens (strain ATCC BAA-477 / NRRL B-23932 / Pf-5).